Reading from the N-terminus, the 425-residue chain is Probable threonylcarbamoyladenosine tRNA methylthiotransferase (425 aa).

The region spanning 2 to 110 is the MTTase N-terminal domain; sequence VKIYIENYGC…IIQAVEYALR (109 aa). C11, C47, C76, C148, C152, and C155 together coordinate [4Fe-4S] cluster. Residues 133–363 enclose the Radical SAM core domain; that stretch reads LSPRTVYFIV…HRIRLQISYE (231 aa). One can recognise a TRAM domain in the interval 366-425; sequence QKYIGKKVEVLIHGEGKKGNVDAVTMNYKHVILPFGNSGEFRIAEIKNATSTYLLGEVMS.

Belongs to the methylthiotransferase family. CDKAL1 subfamily. The cofactor is [4Fe-4S] cluster.

It carries out the reaction N(6)-L-threonylcarbamoyladenosine(37) in tRNA + (sulfur carrier)-SH + AH2 + 2 S-adenosyl-L-methionine = 2-methylsulfanyl-N(6)-L-threonylcarbamoyladenosine(37) in tRNA + (sulfur carrier)-H + 5'-deoxyadenosine + L-methionine + A + S-adenosyl-L-homocysteine + 2 H(+). In terms of biological role, catalyzes the methylthiolation of N6-threonylcarbamoyladenosine (t(6)A), leading to the formation of 2-methylthio-N6-threonylcarbamoyladenosine (ms(2)t(6)A) at position 37 in tRNAs that read codons beginning with adenine. The chain is Probable threonylcarbamoyladenosine tRNA methylthiotransferase from Pyrococcus abyssi (strain GE5 / Orsay).